The chain runs to 124 residues: Small ribosomal subunit protein uS12 (124 aa).

The segment at 1 to 23 (MATINQLVRKPRKRPVAKSDVPA) is disordered. Aspartate 89 carries the post-translational modification 3-methylthioaspartic acid. Residues 101–124 (ALDTSGVQNRRQGRSKYGTKRPKS) form a disordered region. The segment covering 111–124 (RQGRSKYGTKRPKS) has biased composition (basic residues).

The protein belongs to the universal ribosomal protein uS12 family. As to quaternary structure, part of the 30S ribosomal subunit. Contacts proteins S8 and S17. May interact with IF1 in the 30S initiation complex.

Functionally, with S4 and S5 plays an important role in translational accuracy. Its function is as follows. Interacts with and stabilizes bases of the 16S rRNA that are involved in tRNA selection in the A site and with the mRNA backbone. Located at the interface of the 30S and 50S subunits, it traverses the body of the 30S subunit contacting proteins on the other side and probably holding the rRNA structure together. The combined cluster of proteins S8, S12 and S17 appears to hold together the shoulder and platform of the 30S subunit. The protein is Small ribosomal subunit protein uS12 of Chromohalobacter salexigens (strain ATCC BAA-138 / DSM 3043 / CIP 106854 / NCIMB 13768 / 1H11).